Reading from the N-terminus, the 117-residue chain is Large ribosomal subunit protein uL18 (117 aa).

This sequence belongs to the universal ribosomal protein uL18 family. Part of the 50S ribosomal subunit; part of the 5S rRNA/L5/L18/L25 subcomplex. Contacts the 5S and 23S rRNAs.

In terms of biological role, this is one of the proteins that bind and probably mediate the attachment of the 5S RNA into the large ribosomal subunit, where it forms part of the central protuberance. The chain is Large ribosomal subunit protein uL18 from Aeromonas salmonicida (strain A449).